Consider the following 675-residue polypeptide: NADH-ubiquinone oxidoreductase 75 kDa subunit (675 aa).

Positions 2–80 constitute a 2Fe-2S ferredoxin-type domain; that stretch reads KNISFKVNDF…SMNIYTNTLK (79 aa). Residues Cys-36, Cys-47, Cys-50, and Cys-64 each contribute to the [2Fe-2S] cluster site. In terms of domain architecture, 4Fe-4S His(Cys)3-ligated-type spans 80 to 119; the sequence is KVKKARESVLEFLLANHPLDCPICDQGGECDLQDQSVVFG. [4Fe-4S] cluster contacts are provided by His-96, Cys-100, Cys-103, Cys-109, Cys-148, Cys-151, Cys-154, and Cys-198. Residues 217–273 form the 4Fe-4S Mo/W bis-MGD-type domain; the sequence is LKSYNSIDVLDSLHSNIRVDIRGTKIMRILPRVNSELNEDWITDKIRFSYDSFRRQR.

Belongs to the complex I 75 kDa subunit family. As to quaternary structure, complex I is composed of about 30 different subunits. The cofactor is [2Fe-2S] cluster. Requires [4Fe-4S] cluster as cofactor.

The protein localises to the mitochondrion inner membrane. The enzyme catalyses a ubiquinone + NADH + 5 H(+)(in) = a ubiquinol + NAD(+) + 4 H(+)(out). Its function is as follows. Core subunit of the mitochondrial membrane respiratory chain NADH dehydrogenase (Complex I) that is believed to belong to the minimal assembly required for catalysis. Complex I functions in the transfer of electrons from NADH to the respiratory chain. The immediate electron acceptor for the enzyme is believed to be ubiquinone. This is the largest subunit of complex I and it is a component of the iron-sulfur (IP) fragment of the enzyme. It may form part of the active site crevice where NADH is oxidized. The sequence is that of NADH-ubiquinone oxidoreductase 75 kDa subunit (NAD11) from Acanthamoeba castellanii (Amoeba).